Here is a 585-residue protein sequence, read N- to C-terminus: Serine/threonine-protein kinase Nek3 (585 aa).

In terms of domain architecture, Protein kinase spans 4 to 258 (YEVLEQIGKG…AAELLKHPHL (255 aa)). ATP-binding positions include 10 to 18 (IGKGSFGSA) and Lys33. The active-site Proton acceptor is the Asp129. 2 disordered regions span residues 354-413 (GNHS…TPVN) and 489-511 (DSSK…SNPL). Polar residues-rich tracts occupy residues 400 to 413 (RASQ…TPVN) and 498 to 511 (SSDP…SNPL).

This sequence belongs to the protein kinase superfamily. NEK Ser/Thr protein kinase family. NIMA subfamily. As to quaternary structure, interacts with PLIM2B. As to expression, expressed in pollen grains.

It catalyses the reaction L-seryl-[protein] + ATP = O-phospho-L-seryl-[protein] + ADP + H(+). It carries out the reaction L-threonyl-[protein] + ATP = O-phospho-L-threonyl-[protein] + ADP + H(+). In terms of biological role, may be involved in plant development processes. May function downstream of DCW11 in retrograde signaling from the mitochondria to the nucleus. Seems to be involved in the mechanism of cytoplasmic male sterility (CMS) occurrence. This chain is Serine/threonine-protein kinase Nek3, found in Oryza sativa subsp. japonica (Rice).